Reading from the N-terminus, the 361-residue chain is MRKFIIASGGTGGHFYPGFSLGKELRKRSYEVLFVVRKEDAAIKTLTKNNFNYKEINFTGFPRSANPIRHIIFCYKFIVSFWQTLGIINAFKPDVCVGMGGYLSFPVIVWAKIKGIKSAVHDSNTKIGLANKICAKFTNIFLLGLPTSDNIKNTKLVGTPIREEFGLDFNREEVLKSRGLNPNLATVLIFGGSQGSKKLNMAISKTAKKIVKKNDTVQFVHISGDKGYDKLRQEYRGCKNIRLFAYCHDIYFLMRAADFVVCRSGASTIAELYACRKPAVLIPFPYAADNHQYYNGMLLKKAGCAELFVEGDNLAPKLHEYIAGISKNKNILEFMERGYEMLELPDPLKSAEIIADTVESL.

UDP-N-acetyl-alpha-D-glucosamine-binding positions include 11 to 13 (TGG), Asn124, Arg162, Ser193, and Gln292.

Belongs to the glycosyltransferase 28 family. MurG subfamily.

It localises to the cell inner membrane. It catalyses the reaction di-trans,octa-cis-undecaprenyl diphospho-N-acetyl-alpha-D-muramoyl-L-alanyl-D-glutamyl-meso-2,6-diaminopimeloyl-D-alanyl-D-alanine + UDP-N-acetyl-alpha-D-glucosamine = di-trans,octa-cis-undecaprenyl diphospho-[N-acetyl-alpha-D-glucosaminyl-(1-&gt;4)]-N-acetyl-alpha-D-muramoyl-L-alanyl-D-glutamyl-meso-2,6-diaminopimeloyl-D-alanyl-D-alanine + UDP + H(+). Its pathway is cell wall biogenesis; peptidoglycan biosynthesis. In terms of biological role, cell wall formation. Catalyzes the transfer of a GlcNAc subunit on undecaprenyl-pyrophosphoryl-MurNAc-pentapeptide (lipid intermediate I) to form undecaprenyl-pyrophosphoryl-MurNAc-(pentapeptide)GlcNAc (lipid intermediate II). This is UDP-N-acetylglucosamine--N-acetylmuramyl-(pentapeptide) pyrophosphoryl-undecaprenol N-acetylglucosamine transferase from Elusimicrobium minutum (strain Pei191).